A 418-amino-acid chain; its full sequence is Gamma-glutamyl phosphate reductase (418 aa).

This sequence belongs to the gamma-glutamyl phosphate reductase family.

It localises to the cytoplasm. It catalyses the reaction L-glutamate 5-semialdehyde + phosphate + NADP(+) = L-glutamyl 5-phosphate + NADPH + H(+). Its pathway is amino-acid biosynthesis; L-proline biosynthesis; L-glutamate 5-semialdehyde from L-glutamate: step 2/2. Functionally, catalyzes the NADPH-dependent reduction of L-glutamate 5-phosphate into L-glutamate 5-semialdehyde and phosphate. The product spontaneously undergoes cyclization to form 1-pyrroline-5-carboxylate. This chain is Gamma-glutamyl phosphate reductase, found in Lacticaseibacillus casei (strain BL23) (Lactobacillus casei).